We begin with the raw amino-acid sequence, 288 residues long: Disulfide-bond oxidoreductase YghU (288 aa).

Glutathione is bound by residues Asn26, 52-54, Gln87, Ile101, 117-118, Gln151, and Arg178; these read TPN and ES. One can recognise a GST N-terminal domain in the interval 46–133; it reads QLYSLGTPNG…YLAEKFGYFL (88 aa). A GST C-terminal domain is found at 139–265; it reads KRTETMNWLF…RIVNRTNGPL (127 aa). The segment at 260–288 is disordered; sequence RTNGPLNEQLHERHDASDFETNTEDKRQG. The segment covering 268–288 has biased composition (basic and acidic residues); the sequence is QLHERHDASDFETNTEDKRQG.

The protein belongs to the GST superfamily. Nu-class GSH transferase family. Homodimer.

Exhibits a robust glutathione (GSH)-dependent disulfide-bond reductase activity toward the model substrate, 2-hydroxyethyl disulfide; the actual physiological substrates are not known. Also displays a modest GSH-dependent peroxidase activity toward several organic hydroperoxides, such as cumene hydroperoxide and linoleic acid 13(S)-hydroperoxide, but does not reduce H(2)O(2) or tert-butyl hydroperoxide at appreciable rates. Exhibits little or no GSH transferase activity with most typical electrophilic substrates, and has no detectable transferase activity toward 1-chloro-2,4-dinitrobenzene (CDNB) with glutathionylspermidine (GspSH) as the nucleophilic substrate. This Escherichia coli (strain K12) protein is Disulfide-bond oxidoreductase YghU (yghU).